The sequence spans 93 residues: YcgL domain-containing protein VV1058 (93 aa).

Positions 1–84 (MLCSIYKSSK…PPENLLQQHK (84 aa)) constitute a YcgL domain. A disordered region spans residues 74–93 (PPPENLLQQHKERKAQQKND).

The polypeptide is YcgL domain-containing protein VV1058 (Vibrio vulnificus (strain YJ016)).